We begin with the raw amino-acid sequence, 111 residues long: Inner membrane protein YdgC (111 aa).

Over 1–26 (MGLVIKAALGALVVLLIGVLAKTKNY) the chain is Cytoplasmic. A helical transmembrane segment spans residues 27-47 (YIAGLIPLFPTFALIAHYIVA). Topologically, residues 48 to 58 (SERGIEALRAT) are periplasmic. Residues 59-79 (IIFSMWSIIPYFVYLVSLWYF) form a helical membrane-spanning segment. Over 80–87 (TGMMRLPA) the chain is Cytoplasmic. A helical membrane pass occupies residues 88 to 108 (AFVGSVACWGISAWVLIICWI). Over 109 to 111 (KLH) the chain is Periplasmic.

This sequence to P.aeruginosa GlpM.

It is found in the cell inner membrane. This Escherichia coli O157:H7 protein is Inner membrane protein YdgC (ydgC).